A 729-amino-acid polypeptide reads, in one-letter code: Fatty acid oxidation complex subunit alpha (729 aa).

The enoyl-CoA hydratase/isomerase stretch occupies residues 1-189 (MLYKGDTLYL…KIGLVDGVVK (189 aa)). Aspartate 296 contributes to the substrate binding site. A 3-hydroxyacyl-CoA dehydrogenase region spans residues 311 to 729 (ETPKQAAVLG…ARPVGDLKTA (419 aa)). NAD(+)-binding positions include methionine 324, aspartate 343, 400–402 (VVE), lysine 407, and serine 429. Residue histidine 450 is the For 3-hydroxyacyl-CoA dehydrogenase activity of the active site. Asparagine 453 contacts NAD(+). Asparagine 500 and tyrosine 660 together coordinate substrate. The tract at residues 708–729 (RHNEPYYPPVEPARPVGDLKTA) is disordered.

In the N-terminal section; belongs to the enoyl-CoA hydratase/isomerase family. This sequence in the C-terminal section; belongs to the 3-hydroxyacyl-CoA dehydrogenase family. As to quaternary structure, heterotetramer of two alpha chains (FadB) and two beta chains (FadA).

It catalyses the reaction a (3S)-3-hydroxyacyl-CoA + NAD(+) = a 3-oxoacyl-CoA + NADH + H(+). The catalysed reaction is a (3S)-3-hydroxyacyl-CoA = a (2E)-enoyl-CoA + H2O. The enzyme catalyses a 4-saturated-(3S)-3-hydroxyacyl-CoA = a (3E)-enoyl-CoA + H2O. It carries out the reaction (3S)-3-hydroxybutanoyl-CoA = (3R)-3-hydroxybutanoyl-CoA. It catalyses the reaction a (3Z)-enoyl-CoA = a 4-saturated (2E)-enoyl-CoA. The catalysed reaction is a (3E)-enoyl-CoA = a 4-saturated (2E)-enoyl-CoA. Its pathway is lipid metabolism; fatty acid beta-oxidation. In terms of biological role, involved in the aerobic and anaerobic degradation of long-chain fatty acids via beta-oxidation cycle. Catalyzes the formation of 3-oxoacyl-CoA from enoyl-CoA via L-3-hydroxyacyl-CoA. It can also use D-3-hydroxyacyl-CoA and cis-3-enoyl-CoA as substrate. This Escherichia coli O7:K1 (strain IAI39 / ExPEC) protein is Fatty acid oxidation complex subunit alpha.